A 307-amino-acid polypeptide reads, in one-letter code: MANLQKYIEYSREVQQALENNQPIVALESTIISHGMPYPQNVEMATTVEQIIRNNGAIPATIAIIDGKIKIGLESEDLEILATSKDVAKVSRRDLAEVVAMKCVGATTVATTMICAAMAGIQFFVTGGIGGVHKGAEHTMDISADLEELSKTNVTVICAGAKSILDLPKTMEYLETKGVPVIGYQTNELPAFFTRESGVKLTSSVETPERLADIHLTKQQLNLEGGIVVANPIPYEHALSKAYIEAIINEAVVEAENQGIKGKDATPFLLGKIVEKTNGKSLAANIKLVENNAALGAKIAVAVNKLL.

Glu28 serves as the catalytic Proton donor. Residues Lys89 and Val109 each coordinate substrate. A Mn(2+)-binding site is contributed by Asp141. A substrate-binding site is contributed by 143 to 145; that stretch reads SAD. Lys162 acts as the Nucleophile in catalysis.

This sequence belongs to the pseudouridine-5'-phosphate glycosidase family. In terms of assembly, homotrimer. The cofactor is Mn(2+).

The catalysed reaction is D-ribose 5-phosphate + uracil = psi-UMP + H2O. Catalyzes the reversible cleavage of pseudouridine 5'-phosphate (PsiMP) to ribose 5-phosphate and uracil. Functions biologically in the cleavage direction, as part of a pseudouridine degradation pathway. The sequence is that of Pseudouridine-5'-phosphate glycosidase from Staphylococcus aureus (strain MW2).